A 431-amino-acid chain; its full sequence is Fumarylacetoacetase fahA (431 aa).

D133 contributes to the Ca(2+) binding site. Residue Y135 participates in substrate binding. H140 serves as the catalytic Proton acceptor. R149 provides a ligand contact to substrate. The Ca(2+) site is built by E209, E211, and D243. D243 contributes to the Mg(2+) binding site. Residues Q250 and Y254 each contribute to the substrate site. The Mg(2+) site is built by K263 and T267. T362 serves as a coordination point for substrate. A compositionally biased stretch (polar residues) spans T362–K381. Residues T362 to N382 form a disordered region.

The protein belongs to the FAH family. It depends on Ca(2+) as a cofactor. Requires Mg(2+) as cofactor.

It catalyses the reaction 4-fumarylacetoacetate + H2O = acetoacetate + fumarate + H(+). The protein operates within amino-acid degradation; L-phenylalanine degradation; acetoacetate and fumarate from L-phenylalanine: step 6/6. In terms of biological role, fumarylacetoacetase; part of the L-tyrosine degradation gene cluster that mediates the biosynthesis of the brownish pigment pyomelanin as an alternative melanin. The 4-hydroxyphenylpyruvate dioxygenase hppD catalyzes the conversion of 4-hydroxyphenylpyruvate to homogentisic acid (HGA). The protein hmgX is crucial for this conversion and thus, probably functions as an accessory factor to mediate specific activity of hppD. The homogentisate 1,2-dioxygenase hmgA is then involved in the cleavage of the aromatic ring of HGA and its conversion to 4-maleylacetoacetate. When hmgA activity is lowered by the cell wall integrity (CWI) signaling pathway, HGA accumulates and leads to the production of pyomelanin through benzoquinone acetic acid after oxidation and polymerization. On the opposite, in non-stress conditions, both hppD and hmgA activities are balanced and HGA is degraded into 4-maleylacetoacetate. 4-maleylacetoacetate is further converted to 4-fumarylacetoacetate by the maleylacetoacetate isomerase maiA, which is degraded into fumarate and acetoacetate by the fumarylacetoacetase fahA. In Aspergillus fumigatus (strain ATCC MYA-4609 / CBS 101355 / FGSC A1100 / Af293) (Neosartorya fumigata), this protein is Fumarylacetoacetase fahA.